We begin with the raw amino-acid sequence, 452 residues long: Scaffold protein ILK (452 aa).

Methionine 1 is subject to N-acetylmethionine. ANK repeat units follow at residues 2-30, 31-63, 64-96, 97-129, and 130-174; these read DDIF…LNQG, DDHG…INVM, NRGD…INAV, NEHG…VSIC, and NKYG…GTTR. Residues 33 to 139 are interaction with LIMS1; that stretch reads HGFSPLHWAC…NKYGEMPVDK (107 aa). Threonine 173 is modified (phosphothreonine). The tract at residues 180 to 212 is PH-like; mediates interaction with TGFB1I1; sequence GTLNKHSGIDFKQLNFLAKLNENHSGELWKGRW. A Phosphoserine modification is found at serine 186. Residues 193–446 enclose the Protein kinase domain; it reads LNFLAKLNEN…PKFDMIVPIL (254 aa). ATP is bound by residues asparagine 200, asparagine 202, histidine 203, and serine 204. The residue at position 246 (serine 246) is a Phosphoserine. Residues histidine 270, methionine 272, and asparagine 279 each contribute to the ATP site. Aspartate 339 contributes to the Mg(2+) binding site. Lysine 341 is a binding site for ATP. The Nuclear localization signal signature appears at 363 to 371; it reads KKPEDTNRR. The residue at position 426 (lysine 426) is an N6-acetyllysine.

This sequence belongs to the protein kinase superfamily. TKL Ser/Thr protein kinase family. Component of the heterotrimeric IPP (ILK-PINCH-PARVIN) complex composed of ILK, LIMS1/PINCH and PARVA; the complex binds to F-actin via the C-terminal tail of LIMS1 and the N-terminal region of PARVA, promoting F-actin filament bundling. Formation of the IPP complex is dependent on protein kinase C and precedes integrin-mediated cell adhesion and spreading. ILK also interacts with LIMS2/PINCH2 and with PARVB and PARVG which may substitute for LIMS1 and PARVA in the IPP complex; PARVA and PARVB compete for the same binding site. Interaction with PARVG promotes the establishment of cell polarity required for leukocyte migration. Interacts with the cytoplasmic domain of integrin ITGB1 and may also interact with integrins ITGB2, ITGB3 and/or ITGB5. Interacts probably also with TGFB1I1. Interacts (via ANK repeats) with EPHA1 (via SAM domain); stimulated by EFNA1 but independent of the kinase activity of EPHA1. Interacts with FERMT2. Interacts with LIMD2; leading to activate the protein kinase activity. Interacts with PXN/PAXILLIN (via LD motif 4). Interacts with CCDC25 (via cytoplasmic region); initiating the ILK-PARVB cascade to induce cytoskeleton rearrangement and directional migration of cells. Interacts with IQGAP1; the interaction is required for localization of IQGAP1 to the cell cortex. Phosphorylation by PAK1 modulates ILK subcellular location by promoting its nuclear export. Highly expressed in lung, heart, kidney, liver, brain, spleen and skeletal muscle. Weakly expressed in testis.

Its subcellular location is the cell junction. It is found in the focal adhesion. It localises to the cell membrane. The protein localises to the cytoplasm. The protein resides in the myofibril. Its subcellular location is the sarcomere. It is found in the cell projection. It localises to the lamellipodium. The protein localises to the nucleus. The protein resides in the cytoskeleton. Its subcellular location is the microtubule organizing center. It is found in the centrosome. It localises to the cell cortex. In terms of biological role, scaffold protein which mediates protein-protein interactions during a range of cellular events including focal adhesion assembly, cell adhesion and cell migration. Regulates integrin-mediated signal transduction by contributing to inside-out integrin activation. Recruits PARVA and LIMS1/PITCH to form the heterotrimeric IPP (ILK-PINCH-PARVIN) complex which binds to F-actin via the C-terminal tail of LIMS1 and the N-terminal region of PARVA, promoting F-actin filament bundling, a process required to generate force for actin cytoskeleton reorganization and subsequent dynamic cell adhesion events such as cell spreading and migration. Binding to PARVA promotes effective assembly of ILK into focal adhesions while PARVA-bound ILK can simultaneously engage integrin-beta cytoplasmic tails to mediate cell adhesion. Plays a role with PARVG in promoting the cell adhesion and spreading of leukocytes. Acts as an upstream effector of both AKT1/PKB and GSK3. Mediates trafficking of caveolae to the cell surface in an ITGB1-dependent manner by promoting the recruitment of IQGAP1 to the cell cortex which cooperates with its effector DIAPH1 to locally stabilize microtubules and allow stable insertion of caveolae into the plasma membrane. Required for the maintenance of mitotic spindle integrity by promoting phosphorylation of TACC3 by AURKA. Associates with chromatin and may act as a negative regulator of transcription when located in the nucleus. This Mus musculus (Mouse) protein is Scaffold protein ILK.